The following is a 555-amino-acid chain: 2-succinyl-5-enolpyruvyl-6-hydroxy-3-cyclohexene-1-carboxylate synthase (555 aa).

This sequence belongs to the TPP enzyme family. MenD subfamily. In terms of assembly, homodimer. The cofactor is Mg(2+). It depends on Mn(2+) as a cofactor. Thiamine diphosphate serves as cofactor.

The enzyme catalyses isochorismate + 2-oxoglutarate + H(+) = 5-enolpyruvoyl-6-hydroxy-2-succinyl-cyclohex-3-ene-1-carboxylate + CO2. Its pathway is quinol/quinone metabolism; 1,4-dihydroxy-2-naphthoate biosynthesis; 1,4-dihydroxy-2-naphthoate from chorismate: step 2/7. The protein operates within quinol/quinone metabolism; menaquinone biosynthesis. Catalyzes the thiamine diphosphate-dependent decarboxylation of 2-oxoglutarate and the subsequent addition of the resulting succinic semialdehyde-thiamine pyrophosphate anion to isochorismate to yield 2-succinyl-5-enolpyruvyl-6-hydroxy-3-cyclohexene-1-carboxylate (SEPHCHC). The polypeptide is 2-succinyl-5-enolpyruvyl-6-hydroxy-3-cyclohexene-1-carboxylate synthase (Bacteroides thetaiotaomicron (strain ATCC 29148 / DSM 2079 / JCM 5827 / CCUG 10774 / NCTC 10582 / VPI-5482 / E50)).